A 306-amino-acid chain; its full sequence is Ribokinase (306 aa).

Residues 12–14 (NAD), 40–44 (GKGAN), and Glu-141 contribute to the substrate site. ATP contacts are provided by residues Asn-185 and 221-226 (TLGAKG). Positions 247 and 249 each coordinate K(+). 252–253 (GD) lines the ATP pocket. A substrate-binding site is contributed by Asp-253. Asp-253 acts as the Proton acceptor in catalysis. 4 residues coordinate K(+): Ser-283, Lys-286, Gly-288, and Ser-292.

Belongs to the carbohydrate kinase PfkB family. Ribokinase subfamily. Homodimer. Mg(2+) serves as cofactor.

It localises to the cytoplasm. It catalyses the reaction D-ribose + ATP = D-ribose 5-phosphate + ADP + H(+). The protein operates within carbohydrate metabolism; D-ribose degradation; D-ribose 5-phosphate from beta-D-ribopyranose: step 2/2. With respect to regulation, activated by a monovalent cation that binds near, but not in, the active site. The most likely occupant of the site in vivo is potassium. Ion binding induces a conformational change that may alter substrate affinity. Catalyzes the phosphorylation of ribose at O-5 in a reaction requiring ATP and magnesium. The resulting D-ribose-5-phosphate can then be used either for sythesis of nucleotides, histidine, and tryptophan, or as a component of the pentose phosphate pathway. This chain is Ribokinase, found in Haemophilus influenzae (strain ATCC 51907 / DSM 11121 / KW20 / Rd).